Here is a 192-residue protein sequence, read N- to C-terminus: Anthrone oxygenase (192 aa).

3 helical membrane passes run 12–32 (IVTG…TVPV), 54–74 (GHIS…YIAA), and 86–106 (AALV…VMSS). Residues N130, N138, and N147 are each glycosylated (N-linked (GlcNAc...) asparagine). Residues 172–192 (MHLVRSLFPLMAAVLGVGICV) traverse the membrane as a helical segment.

This sequence belongs to the anthrone oxygenase family.

The protein resides in the membrane. It catalyses the reaction emodin anthrone + O2 = emodin + H2O + H(+). It functions in the pathway secondary metabolite biosynthesis. Its function is as follows. Anthrone oxygenase; part of the gene cluster that mediates the biosynthesis of monodictyphenone, a prenyl xanthone derivative. The pathway begins with the synthesis of atrochrysone thioester by the polyketide synthase (PKS) mdpG. The atrochrysone carboxyl ACP thioesterase mdpF then breaks the thioester bond and releases the atrochrysone carboxylic acid from mdpG. The atrochrysone carboxylic acid is then converted to atrochrysone which is further transformed into emodin anthrone by mdpH-1 and mdpH-2. Emodin is further modified to yield monodictyphenone via several steps involving mdpB, mdpC mdpJ, mdpK and mdpL. These enzymes with xptA, xptB and xptC are also proposed to be involved in the synthesis of shamixanthone from emodin. Especially, direct reduction of emodin by the short chain dehydrogenase mdpC followed by dehydration catalyzed by the scytalone dehydratase-like protein mdpB gives loss of oxygen and formation of chrysophanol intermediate in two simple steps. The chain is Anthrone oxygenase from Emericella nidulans (strain FGSC A4 / ATCC 38163 / CBS 112.46 / NRRL 194 / M139) (Aspergillus nidulans).